Reading from the N-terminus, the 357-residue chain is MNESYRCQAATWVERGSSATMGGVLFSAGLLGNLLALVLLARSGLGSCRPGPLHPPPSVFYVLVCGLTVTHLLGKCLISPMVLAAYAQNRSLKELLPASGNQLCEAFAFLMSFFGLASTLQLLAMALECWLSLGHPFFYQRHITARRGVLVAPVAGAFSLAFCALPFAGFGKFVQYCPGTWCFIQMIHKKRSFSVIGFSVLYSSLMALLVLATVVCNLGAMSNLYAMHRRQRHHPRRCSRDRAQSGSDYRHGSPNPLEELDHFVLLALTTVLFTMCSLPLIYRAYYGAFKLVDRADGDSEDLQALRFLSVISIVDPWIFIIFRTSVFRMLFHKAFTRPLIYRNWCSHSWQTNMESTL.

The Extracellular portion of the chain corresponds to 1–20 (MNESYRCQAATWVERGSSAT). An N-linked (GlcNAc...) asparagine glycan is attached at Asn2. The helical transmembrane segment at 21-41 (MGGVLFSAGLLGNLLALVLLA) threads the bilayer. Residues 42-57 (RSGLGSCRPGPLHPPP) lie on the Cytoplasmic side of the membrane. Residues 58–78 (SVFYVLVCGLTVTHLLGKCLI) form a helical membrane-spanning segment. The Extracellular portion of the chain corresponds to 79–106 (SPMVLAAYAQNRSLKELLPASGNQLCEA). Asn89 carries N-linked (GlcNAc...) asparagine glycosylation. Cys104 and Cys182 are disulfide-bonded. The helical transmembrane segment at 107–127 (FAFLMSFFGLASTLQLLAMAL) threads the bilayer. At 128 to 149 (ECWLSLGHPFFYQRHITARRGV) the chain is on the cytoplasmic side. Residues 150-170 (LVAPVAGAFSLAFCALPFAGF) form a helical membrane-spanning segment. Residues 171 to 194 (GKFVQYCPGTWCFIQMIHKKRSFS) are Extracellular-facing. The helical transmembrane segment at 195–215 (VIGFSVLYSSLMALLVLATVV) threads the bilayer. Topologically, residues 216–261 (CNLGAMSNLYAMHRRQRHHPRRCSRDRAQSGSDYRHGSPNPLEELD) are cytoplasmic. A helical membrane pass occupies residues 262 to 282 (HFVLLALTTVLFTMCSLPLIY). At 283–306 (RAYYGAFKLVDRADGDSEDLQALR) the chain is on the extracellular side. The helical transmembrane segment at 307-327 (FLSVISIVDPWIFIIFRTSVF) threads the bilayer. Residues 328 to 357 (RMLFHKAFTRPLIYRNWCSHSWQTNMESTL) are Cytoplasmic-facing.

Belongs to the G-protein coupled receptor 1 family. Strongly expressed in eye and gastrointestinal tract (GIT), moderately in the brain and oviduct and weakly in the epididymis. In the eye, expressed in the epithelium of the iris and ciliary body and in photoreceptor cells of the retina. In the brain, expressed in leptomeninges, choroid plexus and spinal cord (sensory and motor neurons of the dorsal and ventral horns). In the stomach, expressed in the mucous-secreting goblet cells and the columnar epithelium. Expressed in platelets.

The protein resides in the cell membrane. In terms of biological role, receptor for prostaglandin D2 (PGD2). The activity of this receptor is mainly mediated by G(s) proteins that stimulate adenylate cyclase, resulting in an elevation of intracellular cAMP. A mobilization of calcium is also observed, but without formation of inositol 1,4,5-trisphosphate. The protein is Prostaglandin D2 receptor-like (Ptgdrl) of Rattus norvegicus (Rat).